Reading from the N-terminus, the 1088-residue chain is Ran-binding protein 17 (1088 aa).

Ala2 is subject to N-acetylalanine. Position 569 is a phosphoserine (Ser569).

The protein belongs to the exportin family. In terms of assembly, binds to nucleoporins and the GTP-bound form of Ran. Highly expressed in primary spermatocytes and very weakly in pancreas.

The protein resides in the cytoplasm. It localises to the nucleus. Its subcellular location is the nuclear pore complex. In terms of biological role, may function as a nuclear transport receptor. This Mus musculus (Mouse) protein is Ran-binding protein 17 (Ranbp17).